The chain runs to 417 residues: Probable serpin E3 (417 aa).

An N-terminal signal peptide occupies residues 1 to 24 (MPQLSASSLFICLWLVDLCHVANS). Residues asparagine 50, asparagine 106, asparagine 140, asparagine 147, and asparagine 152 are each glycosylated (N-linked (GlcNAc...) asparagine).

It belongs to the serpin family.

It localises to the secreted. Functionally, probable serine protease inhibitor. This chain is Probable serpin E3 (serpine3), found in Danio rerio (Zebrafish).